A 397-amino-acid chain; its full sequence is Chorismate synthase (397 aa).

Positions 40 and 46 each coordinate NADP(+). FMN contacts are provided by residues 129 to 131, 257 to 258, glycine 302, 317 to 321, and arginine 343; these read RSS, QA, and KPISS.

It belongs to the chorismate synthase family. In terms of assembly, homotetramer. Requires FMNH2 as cofactor.

It catalyses the reaction 5-O-(1-carboxyvinyl)-3-phosphoshikimate = chorismate + phosphate. Its pathway is metabolic intermediate biosynthesis; chorismate biosynthesis; chorismate from D-erythrose 4-phosphate and phosphoenolpyruvate: step 7/7. Its function is as follows. Catalyzes the anti-1,4-elimination of the C-3 phosphate and the C-6 proR hydrogen from 5-enolpyruvylshikimate-3-phosphate (EPSP) to yield chorismate, which is the branch point compound that serves as the starting substrate for the three terminal pathways of aromatic amino acid biosynthesis. This reaction introduces a second double bond into the aromatic ring system. In Pelodictyon phaeoclathratiforme (strain DSM 5477 / BU-1), this protein is Chorismate synthase.